Consider the following 104-residue polypeptide: LPVTNNMNKGDTKVMKCIVEVISDTLSKPNPLPISEECLETLRGDERIISILRHQNLLKELQEIAVQGANERTQQQRRTEDQELESLAAIEAELESVAHSLQAL.

Cys17 and Cys38 are disulfide-bonded.

It belongs to the chromogranin/secretogranin protein family. Dimer.

The protein resides in the cytoplasmic vesicle. It localises to the secretory vesicle. It is found in the secreted. Its function is as follows. Chromogranin A probably has a paracrine role in the regulation of secretion or maturation. The polypeptide is Chromogranin-A (CHGA) (Struthio camelus (Common ostrich)).